The primary structure comprises 782 residues: Zinc finger Y-chromosomal protein 1 (782 aa).

Disordered stretches follow at residues 211-233 (ADLE…SKLD) and 360-386 (LNQD…ESKQ). Positions 217–229 (SEVTMNAESGTDS) are enriched in polar residues. The Nuclear localization signal motif lies at 372 to 382 (PKQKSKKKKRP). A compositionally biased stretch (basic residues) spans 373–382 (KQKSKKKKRP). C2H2-type zinc fingers lie at residues 403-425 (YPCM…TKNH), 434-456 (YHCT…MESH), 466-488 (TECD…KTMH), 497-520 (CKCK…LVVH), 526-548 (HICG…IRVH), 554-577 (YECQ…KSKH), 583-605 (LKCG…AVLH), 611-634 (HQCS…ISVH), 640-662 (HKCD…VATH), 668-691 (HQCR…LSAH), 697-719 (FKCK…MKTH), 725-748 (YQCE…ISIH), and 754-777 (HSCD…MRHH).

Belongs to the krueppel C2H2-type zinc-finger protein family. ZFX/ZFY subfamily.

It is found in the nucleus. In terms of biological role, probable transcriptional activator. Binds to the consensus sequence 5'-AGGCCY-3'. The chain is Zinc finger Y-chromosomal protein 1 (Zfy1) from Mus musculus (Mouse).